The sequence spans 349 residues: Acyl-CoA:acyl-CoA alkyltransferase (349 aa).

Glu97 functions as the Proton acceptor in the catalytic mechanism. Cys123 (acyl-thioester intermediate) is an active-site residue.

Belongs to the thiolase-like superfamily. OleA family.

It catalyses the reaction a 1,2-saturated acyl-CoA + an acyl-CoA + H2O = an (R)-2-alkyl-3-oxoalkanoate + 2 CoA + H(+). Functionally, involved in olefin biosynthesis. Catalyzes a non-decarboxylative head-to-head Claisen condensation of two acyl-CoA molecules, generating an (R)-2-alkyl-3-oxoalkanoate. The S.oneidensis oleABCD genes produce 3,6,9,12,15,19,22,25,28-hentriacontanonaene, which may aid the cells in adapting to a sudden drop in temperature. This Shewanella oneidensis (strain ATCC 700550 / JCM 31522 / CIP 106686 / LMG 19005 / NCIMB 14063 / MR-1) protein is Acyl-CoA:acyl-CoA alkyltransferase.